The chain runs to 347 residues: N-acetyl-gamma-glutamyl-phosphate reductase (347 aa).

The active site involves cysteine 152.

It belongs to the NAGSA dehydrogenase family. Type 1 subfamily.

Its subcellular location is the cytoplasm. The enzyme catalyses N-acetyl-L-glutamate 5-semialdehyde + phosphate + NADP(+) = N-acetyl-L-glutamyl 5-phosphate + NADPH + H(+). Its pathway is amino-acid biosynthesis; L-arginine biosynthesis; N(2)-acetyl-L-ornithine from L-glutamate: step 3/4. Catalyzes the NADPH-dependent reduction of N-acetyl-5-glutamyl phosphate to yield N-acetyl-L-glutamate 5-semialdehyde. The sequence is that of N-acetyl-gamma-glutamyl-phosphate reductase from Neisseria meningitidis serogroup C (strain 053442).